The chain runs to 446 residues: Keratin, type I cytoskeletal 25 (446 aa).

Residues 1 to 74 (MSLRLSSGSR…VNEGGLLSGN (74 aa)) form a head region. The segment at 75-110 (EKVTMQNLNDRLASYLDNVQALQEANADLEQKIKGW) is coil 1A. The IF rod domain occupies 75-390 (EKVTMQNLND…LLIGGDEGAC (316 aa)). The linker 1 stretch occupies residues 111–132 (YEKFGPGSCRGLDHDYSRYFPI). Positions 133–224 (IDDLKNQIIT…KNHKEEMQAL (92 aa)) are coil 1B. The tract at residues 225 to 247 (QCAAGGNVNVEMNAAPGVDLTVL) is linker 12. Positions 248 to 386 (LNNMRAEYEA…ETYCLLIGGD (139 aa)) are coil 2. The segment at 387 to 446 (EGACKSSSYKSKDYGSGNAGNQIKDPVKAIVVKKVLEEVDQRSKILTTRLHSLEEKSQSN) is tail. Ser438 bears the Phosphoserine mark.

This sequence belongs to the intermediate filament family. Heterodimer of a type I and a type II keratin. Heterodimer with type II keratin KRT5 leading to the formation of keratin intermediate filament (KIF) network. Interacts with KRT6A to form filaments.

The protein resides in the cytoplasm. Essential for the proper assembly of type I and type II keratin protein complexes and formation of keratin intermediate filaments in the inner root sheath (irs). Plays a role in the cytoskeleton organization. The chain is Keratin, type I cytoskeletal 25 from Mus musculus (Mouse).